Reading from the N-terminus, the 1278-residue chain is MTTHVTLEDALSNVDLLEELPLPDQQPCIEPPPSSIMYQANFDTNFEDRNAFVTGIARYIEQATVHSSMNEMLEEGHEYAVMLYTWRSCSRAIPQVKCNEQPNRVEIYEKTVEVLEPEVTKLMKFMYFQRKAIERFCSEVKRLCHAERRKDFVSEAYLLTLGKFINMFAVLDELKNMKCSVKNDHSAYKRAAQFLRKMADPQSIQESQNLSMFLANHNRITQCLHQQLEVIPGYEELLADIVNICVDYYENKMYLTPSEKHMLLKVMGFGLYLMDGNVSNIYKLDAKKRINLSKIDKFFKQLQVVPLFGDMQIELARYIKTSAHYEENKSKWTCTQSSISPQYNICEQMVQIRDDHIRFISELARYSNSEVVTGSGLDSQKSDEEYRELFDLALRGLQLLSKWSAHVMEVYSWKLVHPTDKFCNKDCPGTAEEYERATRYNYTSEEKFAFVEVIAMIKGLQVLMGRMESVFNQAIRNTIYAALQDFAQVTLREPLRQAVRKKKNVLISVLQAIRKTICDWEGGREPPNDPCLRGEKDPKGGFDIKVPRRAVGPSSTQACQWSPRALFHPTGGTQGRRGCRSLLYMVRTMLESLIADKSGSKKTLRSSLDGPIVLAIEDFHKQSFFFTHLLNISEALQQCCDLSQLWFREFFLELTMGRRIQFPIEMSMPWILTDHILETKEPSMMEYVLYPLDLYNDSAYYALTKFKKQFLYDEIEAEVNLCFDQFVYKLADQIFAYYKAMAGSVLLDKRFRAECKNYGVIIPYPPSNRYETLLKQRHVQLLGRSIDLNRLITQRISAAMYKSLDQAISRFESEDLTSIVELEWLLEINRLTHRLLCKHMTLDSFDAMFREANHNVSAPYGRITLHVFWELNFDFLPNYCYNGSTNRFVRTAIPFTQEPQRDKPANVQPYYLYGSKPLNIAYSHIYSSYRNFVGPPHFKTICRLLGYQGIAVVMEELLKIVKSLLQGTILQYVKTLIEVMPKICRLPRHEYGSPGILEFFHHQLKDIIEYAELKTDVFQSLREVGNAILFCLLIEQALSQEEVCDLLHAAPFQNILPRVYIKEGERLEVRMKRLEAKYAPLHLVPLIERLGTPQQIAIAREGDLLTKERLCCGLSMFEVILTRIRSYLQDPIWRGPPPTNGVMHVDECVEFHRLWSAMQFVYCIPVGTNEFTAEQCFGDGLNWAGCSIIVLLGQQRRFDLFDFCYHLLKVQRQDGKDEIIKNVPLKKMADRIRKYQILNNEVFAILNKYMKSVETDSSTVEHVRCFQPPIHQSLATTC.

K1062 carries the N6-acetyllysine modification.

It belongs to the CYFIP family. As to quaternary structure, component of the WAVE1 complex composed of ABI2, CYFIP2, BRK1, NCKAP1 and WASF1/WAVE1. Interacts with FMR1, FXR1 and FXR2. Interacts with FMR1 isoform 6; the interaction occurs in a RNA-dependent manner. Interacts with RAC1 (activated form) which causes the complex to dissociate, releasing activated WASF1. The complex can also be activated by NCK1. Interacts with SHANK3; the interaction mediates the association of SHANK3 with the WAVE1 complex. Interacts with TMEM108 (via N-terminus); the interaction associates TMEM108 with the WAVE1 complex. As to expression, expressed in T-cells. Increased expression is observed in CD4(+) T-lymphocytes from patients with multiple sclerosis (at protein level).

The protein localises to the cytoplasm. The protein resides in the nucleus. It is found in the perinuclear region. Its subcellular location is the synapse. It localises to the synaptosome. Its function is as follows. Involved in T-cell adhesion and p53/TP53-dependent induction of apoptosis. Does not bind RNA. As component of the WAVE1 complex, required for BDNF-NTRK2 endocytic trafficking and signaling from early endosomes. In Homo sapiens (Human), this protein is Cytoplasmic FMR1-interacting protein 2.